The sequence spans 410 residues: Na(+)-translocating NADH-quinone reductase subunit B (410 aa).

3 helical membrane passes run methionine 56–glycine 76, leucine 119–tryptophan 139, and serine 159–isoleucine 179. The residue at position 232 (threonine 232) is an FMN phosphoryl threonine. A run of 5 helical transmembrane segments spans residues glycine 266–alanine 286, isoleucine 293–serine 313, methionine 318–phenylalanine 338, serine 347–isoleucine 367, and glycine 377–alanine 397.

This sequence belongs to the NqrB/RnfD family. Composed of six subunits; NqrA, NqrB, NqrC, NqrD, NqrE and NqrF. It depends on FMN as a cofactor.

Its subcellular location is the cell inner membrane. The enzyme catalyses a ubiquinone + n Na(+)(in) + NADH + H(+) = a ubiquinol + n Na(+)(out) + NAD(+). In terms of biological role, NQR complex catalyzes the reduction of ubiquinone-1 to ubiquinol by two successive reactions, coupled with the transport of Na(+) ions from the cytoplasm to the periplasm. NqrA to NqrE are probably involved in the second step, the conversion of ubisemiquinone to ubiquinol. The chain is Na(+)-translocating NADH-quinone reductase subunit B from Neisseria meningitidis serogroup A / serotype 4A (strain DSM 15465 / Z2491).